The following is a 322-amino-acid chain: Nuclease 1, mitochondrial (322 aa).

The active-site Proton acceptor is the histidine 142. Asparagine 174 contacts Mg(2+).

Belongs to the DNA/RNA non-specific endonuclease family. In terms of assembly, homodimer. Mn(2+) is required as a cofactor. The cofactor is Mg(2+).

The protein resides in the mitochondrion inner membrane. In terms of biological role, this enzyme has both RNase and DNase activity. It degrades single-stranded DNA and RNA. In Schizosaccharomyces pombe (strain 972 / ATCC 24843) (Fission yeast), this protein is Nuclease 1, mitochondrial (pnu1).